Consider the following 476-residue polypeptide: MAPQLAGSSHSSSASDQAHRQSSDPALESGSDTHVGSIAPKTETDFLVSFTGDDDPRSPKHMSSARKWLIVAIVSSTRLGLSPMILAPLSEFYGRKPVYVVSMFFFVVWIIPCAVARNIETLIVARFFNGFAGAAFLSVAGGTVGDLFPKNKLQAPMMVYTASPFLGPELGPVIGNFINSYLDWRWSFYILLIWAFAQWVSISLLVPETYHPVLLRREAQRLRKETGDDRYYAPIEKMDRSIAQTIIRSCYRPFLLLTLEPMCLLLCLFCSVLLGVLYLFFGAFSLVFKDNHGFNLWQVGLSFLGITVGMIIGISTNPFWHRNFMRLLQNHEAKTGTVGSSEPEFRLPPAVGGAPLVTIGLLWFAWTTYPSVHWIVPIIGSGIFGAGVIMIFSGVFTFLVDAYPLYAASALAANSFSRSMFAAAFPLFGQAMFRNLGYQWAGFLLAMITLLLAPFPYIFYRWGAKIRQHSRYAGAK.

Residues 1 to 38 (MAPQLAGSSHSSSASDQAHRQSSDPALESGSDTHVGSI) form a disordered region. 10 consecutive transmembrane segments (helical) span residues 69-89 (LIVA…LAPL), 96-116 (KPVY…CAVA), 127-147 (FFNG…VGDL), 186-206 (WSFY…SLLV), 264-284 (LLLC…FGAF), 294-314 (FNLW…IIGI), 347-367 (LPPA…FAWT), 372-392 (VHWI…IMIF), 403-425 (YPLY…AAAF), and 440-460 (WAGF…YIFY).

The protein belongs to the major facilitator superfamily.

The protein localises to the cell membrane. Efflux pump that might be required for efficient secretion of terreic acid. This chain is Efflux pump atB, found in Aspergillus terreus (strain NIH 2624 / FGSC A1156).